The primary structure comprises 298 residues: Ethanolamine ammonia-lyase small subunit (298 aa).

The adenosylcob(III)alamin site is built by V210, E231, and C261.

This sequence belongs to the EutC family. The basic unit is a heterodimer which dimerizes to form tetramers. The heterotetramers trimerize; 6 large subunits form a core ring with 6 small subunits projecting outwards. The cofactor is adenosylcob(III)alamin.

It is found in the bacterial microcompartment. The catalysed reaction is ethanolamine = acetaldehyde + NH4(+). The protein operates within amine and polyamine degradation; ethanolamine degradation. Catalyzes the deamination of various vicinal amino-alcohols to oxo compounds. Allows this organism to utilize ethanolamine as the sole source of nitrogen and carbon in the presence of external vitamin B12. This is Ethanolamine ammonia-lyase small subunit from Salmonella heidelberg (strain SL476).